We begin with the raw amino-acid sequence, 249 residues long: MADS-box transcription factor 17 (249 aa).

The region spanning 1-61 (MGRGRVELKR…GKLYEFGSAG (61 aa)) is the MADS-box domain. The 91-residue stretch at 88–178 (HQSWYQEMSR…KNKLEAEADS (91 aa)) folds into the K-box domain. The tract at residues 228-249 (ANPRSNGGGGDQNNNFVMGWPL) is disordered.

May interact with the K-box of MADS6. Expressed in the floral meristem, lodicule, palea, lemma, receptacle, empty glume, stamen, pistil, and ovule.

Its subcellular location is the nucleus. In terms of biological role, probable transcription factor. Plays minor but redundant roles with MADS6 in floral development. The sequence is that of MADS-box transcription factor 17 (MADS17) from Oryza sativa subsp. japonica (Rice).